A 221-amino-acid chain; its full sequence is MILVLAEAALELVPESLWRHPAIVADARRRGKKPGEILLDRARHHVAMAKLDKAERRGRPDIVHQVLLAFQYSLLNRAGRGRAFVHTVGDYIISVKPETRVPKNYNNFVSLMEQLFKVGRVPPEGEALMEARRGSLAALLEELGGKWVALHEQGRAVSFAELGRAVADAVVVVGGFPHGDFENKWILEGAEAVYKIGNVSLDAAQAVCRAVAAAEAALGLI.

S-adenosyl-L-methionine contacts are provided by residues Gly-174, Gly-179, and 196 to 201; that span reads IGNVSL.

This sequence belongs to the class IV-like SAM-binding methyltransferase superfamily. RNA methyltransferase NEP1 family. As to quaternary structure, homodimer.

The catalysed reaction is a pseudouridine in rRNA + S-adenosyl-L-methionine = an N(1)-methylpseudouridine in rRNA + S-adenosyl-L-homocysteine + H(+). Functionally, methyltransferase involved in ribosomal biogenesis. Specifically catalyzes the N1-methylation of the pseudouridine corresponding to position 914 in M.jannaschii 16S rRNA. The sequence is that of Ribosomal RNA small subunit methyltransferase Nep1 from Pyrobaculum calidifontis (strain DSM 21063 / JCM 11548 / VA1).